The chain runs to 1476 residues: Cystic fibrosis transmembrane conductance regulator (1476 aa).

Topologically, residues 1–77 (MQKSPLEKAS…QLIHALRRCF (77 aa)) are cytoplasmic. The helical transmembrane segment at 78–98 (VWRFVFYGVLLYLGEVTKAVQ) threads the bilayer. One can recognise an ABC transmembrane type-1 1 domain in the interval 81-365 (FVFYGVLLYL…TAVQIWYDSL (285 aa)). Over 99-122 (PVLLGRIIASYDPDNTEERSIAIY) the chain is Extracellular. The helical transmembrane segment at 123–146 (LGIGLCLLFIVRTLLLHPAIFGLH) threads the bilayer. Over 147-195 (HIGMQMRIAMFSLIYKKTLKLSSRVLDKISIGQLISLLSNNLNKFDEGL) the chain is Cytoplasmic. Residues 196–216 (ALAHFIWIAPLQVVLLMGLLW) traverse the membrane as a helical segment. The Extracellular portion of the chain corresponds to 217-222 (DLLQFS). A helical membrane pass occupies residues 223–243 (AFCGLGLLIVLVIFQAILGKM). The Cytoplasmic portion of the chain corresponds to 244-298 (MVKYRDKRAAKINERLVITSEVIDNIYSVKAYCWESAMEKIIESLREEELKMTRR). The helical transmembrane segment at 299–319 (SAYMRFFTSSAFFFSGFFVVF) threads the bilayer. Residues 320-339 (LSVLPYTVINGIVLRKIFTT) lie on the Extracellular side of the membrane. The chain crosses the membrane as a helical span at residues 340-358 (ISFCIVLRMSVTRQFPTAV). Residues 359 to 853 (QIWYDSLGMI…YLRYFTLHRG (495 aa)) lie on the Cytoplasmic side of the membrane. ATP-binding positions include Trp-401, 458 to 465 (GSTGAGKT), and Gln-493. The region spanning 412–646 (VQLNNDDRKT…RPDFSSKLMG (235 aa)) is the ABC transporter 1 domain. Cys-524 carries the S-palmitoyl cysteine lipid modification. Phosphoserine occurs at positions 549 and 660. The interval 654–826 (TEERRSSILT…EEINEEDLKE (173 aa)) is disordered R region. Ser-670 bears the Phosphoserine; by PKA mark. Phosphoserine occurs at positions 684, 698, and 710. Position 715 is a phosphothreonine (Thr-715). Phosphoserine is present on residues Ser-732, Ser-763, Ser-785, Ser-790, and Ser-808. A helical membrane pass occupies residues 854 to 874 (LFAVLIWCVLVFLVEVAASLF). Positions 854-1153 (LFAVLIWCVL…SSIDTDSLMR (300 aa)) constitute an ABC transmembrane type-1 2 domain. Over 875–913 (VLWLLKNNPVNGGNNGTKIANTSYVVVITSSSFYYIFYI) the chain is Extracellular. 2 N-linked (GlcNAc...) asparagine glycosylation sites follow: Asn-889 and Asn-895. The discontinuously helical transmembrane segment at 914 to 934 (YVGVADTLLALSLFRGLPLVH) threads the bilayer. At 935 to 985 (TLITASKILHRKMLHSILHAPMSTFNKLKAGGILNRFSKDIAILDDFLPLT) the chain is on the cytoplasmic side. The helical transmembrane segment at 986–1006 (IFDFIQLLFIVVGAIIVVSAL) threads the bilayer. The Extracellular portion of the chain corresponds to 1007–1008 (QP). Residues 1009-1029 (YIFLATVPGLAVFILLRAYFL) traverse the membrane as a helical segment. Residues 1030–1090 (HTSQQLKQLE…TANWFMYLAT (61 aa)) are Cytoplasmic-facing. The chain crosses the membrane as a helical span at residues 1091–1111 (LRWFQMRIDMIFVLFFIVVTF). The Extracellular portion of the chain corresponds to 1112–1125 (ISILTTGEGEGTTG). A helical membrane pass occupies residues 1126 to 1146 (IILTLAMNIMSTLQWAVNSSI). Residues 1147-1476 (DTDSLMRSVS…TEEEVQETRL (330 aa)) are Cytoplasmic-facing. The ABC transporter 2 domain occupies 1208–1439 (VKDLTVKYVD…KSVFQRALSS (232 aa)). ATP contacts are provided by residues Tyr-1215 and 1240–1247 (GRTGSGKS). Residues 1382–1476 (RVLRQAFAGC…TEEEVQETRL (95 aa)) form an interaction with GORASP2 region. Residue Cys-1391 is the site of S-palmitoyl cysteine attachment. Residues Ser-1440 and Ser-1452 each carry the phosphoserine modification. Residues 1445 to 1456 (LFHGRHSSKQKP) are compositionally biased toward basic residues. The interval 1445–1476 (LFHGRHSSKQKPRTQITAVKEETEEEVQETRL) is disordered. Residues 1466 to 1476 (ETEEEVQETRL) are compositionally biased toward acidic residues. Positions 1474–1476 (TRL) match the PDZ-binding motif.

The protein belongs to the ABC transporter superfamily. ABCC family. CFTR transporter (TC 3.A.1.202) subfamily. Monomer; does not require oligomerization for channel activity. May form oligomers in the membrane. Interacts with SLC4A7 through NHERF1. Interacts with SHANK2. Interacts with NHERF1 and MYO6. Interacts (via C-terminus) with GOPC (via PDZ domain); this promotes CFTR internalization and thereby decreases channel activity. Interacts with SLC4A7 through NHERF1. Found in a complex with MYO5B and RAB11A. Interacts with ANO1. Interacts with SLC26A8. Interacts with AHCYL1; the interaction increases CFTR activity. Interacts with CSE1L. The core-glycosylated form interacts with GORASP2 (via PDZ GRASP-type 1 domain) in respone to ER stress. Interacts with MARCHF2; the interaction leads to CFTR ubiqtuitination and degradation. Interacts with ADGRG2. Post-translationally, N-glycosylated. Phosphorylated; cAMP treatment promotes phosphorylation and activates the channel. Dephosphorylation decreases the ATPase activity (in vitro). Phosphorylation at PKA sites activates the channel. Phosphorylation at PKC sites enhances the response to phosphorylation by PKA. Phosphorylated by AMPK; this inhibits channel activity. In terms of processing, ubiquitinated, leading to its degradation in the lysosome. Deubiquitination by USP10 in early endosomes enhances its endocytic recycling to the cell membrane. Ubiquitinated by RNF185 during ER stress. Ubiquitinated by MARCHF2. As to expression, detected in epithelial cells in nasopharynx, submandibular gland, pancreas and ileum (at protein level). Expressed in the epididymis. In the caput section of the epididymis, expressed uniformly on both the luminal and basolateral sides of the ducts and on sperm in the caput lumen (at protein level). In the cauda, detected along the luminal border but not continuously and is also expressed on the basolateral surface. Within the caudal lumen, detected on sperm.

Its subcellular location is the apical cell membrane. The protein resides in the early endosome membrane. The protein localises to the cell membrane. It is found in the recycling endosome membrane. It localises to the endoplasmic reticulum membrane. Its subcellular location is the nucleus. The catalysed reaction is ATP + H2O + closed Cl(-) channel = ADP + phosphate + open Cl(-) channel.. The enzyme catalyses chloride(in) = chloride(out). It catalyses the reaction hydrogencarbonate(in) = hydrogencarbonate(out). It carries out the reaction ATP + H2O = ADP + phosphate + H(+). In terms of biological role, epithelial ion channel that plays an important role in the regulation of epithelial ion and water transport and fluid homeostasis. Mediates the transport of chloride ions across the cell membrane. Possesses an intrinsic ATPase activity and utilizes ATP to gate its channel; the passive flow of anions through the channel is gated by cycles of ATP binding and hydrolysis by the ATP-binding domains. The ion channel is also permeable to HCO(3)(-); selectivity depends on the extracellular chloride concentration. Exerts its function also by modulating the activity of other ion channels and transporters. Contributes to the regulation of the pH and the ion content of the epithelial fluid layer. Modulates the activity of the epithelial sodium channel (ENaC) complex, in part by regulating the cell surface expression of the ENaC complex. May regulate bicarbonate secretion and salvage in epithelial cells by regulating the transporter SLC4A7. Can inhibit the chloride channel activity of ANO1. Plays a role in the chloride and bicarbonate homeostasis during sperm epididymal maturation and capacitation. The chain is Cystic fibrosis transmembrane conductance regulator from Rattus norvegicus (Rat).